We begin with the raw amino-acid sequence, 483 residues long: MSTLMVQGTTSDAGKSTLVTALCRWLWRQGVSVVPFKPQNMALNSAVTADGGEIGRAQAVQAQAANLAPHTDMNPVLLKPNSDTGSQVIIHGRAVTSMNAVAYHDYKAIAMQAVLASHERLKSAYQVVMVEGAGSPAEINLRAGDIANMGFAEAVDCPVLLIADINRGGVFAHLVGTLELLSPSEQARVKGFIINRFRGDLALLQPGLDWLEARTGKPVIGVLPYVLDLHLEAEDGIDQRQVGKVEQLLKVVVPVLPRISNHTDFDPLRLHPQVDLQFIGPGQAIPAADLIILPGSKSVRGDLAYLRSNGWDRAVARHLRYGGKVLGICGGLQMLGEQVHDPLGLEGAAGSSPGLGLLAFETVLEEEKQLRNVSGRLSLENAAVSGYEIHAGVTRGPALELAAVQLDDGRSDGACSADGQILGTYLHGLFETPAACSALLRWAGLEAVQEVDYHALRERDIERLADLVEHHLDTAALRRLCGL.

The region spanning 248 to 435 (LLKVVVPVLP…LHGLFETPAA (188 aa)) is the GATase cobBQ-type domain. C329 (nucleophile) is an active-site residue. Residue H427 is part of the active site.

It belongs to the CobB/CobQ family. CobQ subfamily.

It participates in cofactor biosynthesis; adenosylcobalamin biosynthesis. Catalyzes amidations at positions B, D, E, and G on adenosylcobyrinic A,C-diamide. NH(2) groups are provided by glutamine, and one molecule of ATP is hydrogenolyzed for each amidation. The polypeptide is Cobyric acid synthase (Pseudomonas fluorescens (strain ATCC BAA-477 / NRRL B-23932 / Pf-5)).